The following is a 166-amino-acid chain: Deglycase TK1284 (166 aa).

One can recognise a PfpI endopeptidase domain in the interval 1-166 (MKVLILSADG…WMREFVKLLR (166 aa)). H101 is an active-site residue.

Belongs to the peptidase C56 family. In terms of assembly, homohexamer formed by a dimer of trimers that assemble into a hollow ring structure.

It is found in the cytoplasm. The catalysed reaction is N(omega)-(1-hydroxy-2-oxopropyl)-L-arginyl-[protein] + H2O = lactate + L-arginyl-[protein] + H(+). It carries out the reaction N(6)-(1-hydroxy-2-oxopropyl)-L-lysyl-[protein] + H2O = lactate + L-lysyl-[protein] + H(+). It catalyses the reaction S-(1-hydroxy-2-oxopropyl)-L-cysteinyl-[protein] + H2O = lactate + L-cysteinyl-[protein] + H(+). The enzyme catalyses N(omega)-(1-hydroxy-2-oxoethyl)-L-arginyl-[protein] + H2O = L-arginyl-[protein] + glycolate + H(+). The catalysed reaction is N(6)-(1-hydroxy-2-oxoethyl)-L-lysyl-[protein] + H2O = glycolate + L-lysyl-[protein] + H(+). It carries out the reaction S-(1-hydroxy-2-oxoethyl)-L-cysteinyl-[protein] + H2O = glycolate + L-cysteinyl-[protein] + H(+). In terms of biological role, deglycase that catalyzes the deglycation of the Maillard adducts formed between amino groups of proteins and reactive carbonyl groups of glyoxals. Thus, functions as a protein deglycase that repairs methylglyoxal- and glyoxal-glycated proteins, and releases repaired proteins and lactate or glycolate, respectively. Deglycates cysteine, arginine and lysine residues in proteins, and thus reactivates these proteins by reversing glycation by glyoxals. Acts on early glycation intermediates (hemithioacetals and aminocarbinols), preventing the formation of advanced glycation endproducts (AGE) that cause irreversible damage. Also displays proteolytic activity. The protein is Deglycase TK1284 of Thermococcus kodakarensis (strain ATCC BAA-918 / JCM 12380 / KOD1) (Pyrococcus kodakaraensis (strain KOD1)).